Consider the following 383-residue polypeptide: Cathepsin D (383 aa).

The signal sequence occupies residues 1 to 18; the sequence is MKLLILTLFLATIVLAQA. A propeptide spanning residues 19–48 is cleaved from the precursor; the sequence is LTVPLNFHQASRESRRRVPQKWSNRLSALN. Positions 63–378 constitute a Peptidase A1 domain; it reads YYGAITIGTP…DFGNKQVGFA (316 aa). Residue D81 is part of the active site. C94 and C101 are joined by a disulfide. 2 N-linked (GlcNAc...) asparagine glycosylation sites follow: N118 and N238. A disulfide bridge connects residues C259 and C263. D268 is a catalytic residue. C302 and C339 are oxidised to a cystine. The N-linked (GlcNAc...) asparagine glycan is linked to N310.

It belongs to the peptidase A1 family. In terms of assembly, monomer. In terms of processing, N-glycosylated on 2 out of the 3 potential sites. Glycans contain sulfated Mannose.

The protein localises to the lysosome. The protein resides in the secreted. It catalyses the reaction Specificity similar to, but narrower than, that of pepsin A. Does not cleave the 4-Gln-|-His-5 bond in B chain of insulin.. Protease that may act during cell growth and/or development. In Dictyostelium discoideum (Social amoeba), this protein is Cathepsin D (ctsD).